We begin with the raw amino-acid sequence, 540 residues long: MIFHGEQLENHDKPVHEVLLERFKVHQEKDPDNVAFVTAENEDDSLGFQQLGKKVLQISEWFVENGYKKGDVFLLASYNNWRCFAAALGAWRAGLIVSAAASQFTSFEMNYQIEDSQSQVILVDKHTLPVVQEACKNLKFVKQIISISANPPSPVIKFDVLTSRLVRNLKMPLIDPKNDIVFLPYSSGTTGKPKGVMISHLNFSMMLESSLRFFDANAKAIGLPPDFVLPYDLHFLPMYHAMGMFRTLLTSYRGTTQIMFTKFDMELMLKNIEKYSIMVLSLVPAIAVRMLNSPLLQKYDVSSLVSVTVGSAPFPESASKKLKQLLPNVNIVQGYGMTELTFATHLQSPGSPDGSVGRLVPGTSMKVKKEDGTLCGPHEIGELWIKGPQMMKGYWKKEQQTNELLDEHGFMRTGDIVYFDKNGETFICDRIKELIKVNAKQVAPAELESVILEHDDVADVCVFGVDDASSGERPVACVVSKRGRDMETSKAIMKHINQKLARYKHIKEIEFVSEIMRTGTGKLLRRAMKKAFLDAKKAKL.

ATP-binding positions include 186 to 194 (SSGTTGKPK), aspartate 415, arginine 430, and lysine 522. Residues 538–540 (AKL) carry the Microbody targeting signal motif.

The protein belongs to the ATP-dependent AMP-binding enzyme family. In terms of tissue distribution, expressed in intestine.

Its subcellular location is the peroxisome. It catalyses the reaction nonanoate + ATP + CoA = nonanoyl-CoA + AMP + diphosphate. The catalysed reaction is IC-asc-C7 + ATP + CoA = IC-asc-C7-CoA + AMP + diphosphate. It carries out the reaction IC-asc-C9 + ATP + CoA = IC-asc-C9-CoA + AMP + diphosphate. Functionally, plays a role in ascaroside pheromones biosynthesis, which regulates development and behavior. Specifically, activates the side chain of medium-chain indol-3-carbonyl (IC)-ascarosides for shortening through beta-oxidation. Converts IC-asc-C7 and IC-asc-C9 into IC-asc-C7-CoA and IC-asc-C9-CoA, respectively. May play a role in fatty-acid metabolism by activating and converting nonanoate (C9) into nonanoyl-CoA (C9-CoA). This chain is Acyl-CoA synthetase 7, found in Caenorhabditis elegans.